The primary structure comprises 178 residues: GTP-dependent dephospho-CoA kinase (178 aa).

Residues D55, V57, D74, K76, and E127 each coordinate GTP.

It belongs to the GTP-dependent DPCK family.

It catalyses the reaction 3'-dephospho-CoA + GTP = GDP + CoA + H(+). It functions in the pathway cofactor biosynthesis; coenzyme A biosynthesis. Its function is as follows. Catalyzes the GTP-dependent phosphorylation of the 3'-hydroxyl group of dephosphocoenzyme A to form coenzyme A (CoA). The sequence is that of GTP-dependent dephospho-CoA kinase from Saccharolobus islandicus (strain Y.G.57.14 / Yellowstone #1) (Sulfolobus islandicus).